Here is a 796-residue protein sequence, read N- to C-terminus: MEEEASRSAAATNPGSRLTRWPPPDKREGSAVDPGKRRSLAATPSSSLPCTLIALGLRHEKEANELMEDLFETFQDEMGFSNMEDDGPEEEERVAEPQANFNTPQALRFEELLANLLNEQHQIAKELFEQLKMKKPSAKQQKEVEKVKPQCKEVHQTLILDPAQRKRLQQQMQQHVQLLTQIHLLATCNPNLNPEASSTRICLKELGTFAQSSIALHHQYNPKFQTLFQPCNLMGAMQLIEDFSTHVSIDCSPHKTVKKTANEFPCLPKQVAWILATSKVFMYPELLPVCSLKAKNPQDKILFTKAEDNKYLLTCKTARQLTVRIKNLNMNRAPDNIIKFYKKTKQLPVLGKCCEEIQPHQWKPPIEREEHRLPFWLKASLPSIQEELRHMADGAREVGNMTGTTEINSDQGLEKDNSELGSETRYPLLLPKGVVLKLKPVADRFPKKAWRQKRSSVLKPLLIQPSPSLQPSFNPGKTPAQSTHSEAPPSKMVLRIPHPIQPATVLQTVPGVPPLGVSGGESFESPAALPAMPPEARTSFPLSESQTLLSSAPVPKVMMPSPASSMFRKPYVRRRPSKRRGARAFRCIKPAPVIHPASVIFTVPATTVKIVSLGGGCNMIQPVNAAVAQSPQTIPIATLLVNPTSFPCPLNQPLVASSVSPLIVSGNSVNLPIPSTPEDKAHMNVDIACAVADGENAFQGLEPKLEPQELSPLSATVFPKVEHSPGPPPVDKQCQEGLSENSAYRWTVVKTEEGRQALEPLPQGIQESLNNSSPGDLEEVVKMEPEDATEEISGFL.

Disordered regions lie at residues 1–45 (MEEE…ATPS) and 463–488 (IQPS…SEAP). Residues 23–36 (PPDKREGSAVDPGK) are compositionally biased toward basic and acidic residues. Over residues 463-472 (IQPSPSLQPS) the composition is skewed to low complexity. Residues 473 to 485 (FNPGKTPAQSTHS) show a composition bias toward polar residues. Ser724 is subject to Phosphoserine. A disordered region spans residues 755-776 (RQALEPLPQGIQESLNNSSPGD). A compositionally biased stretch (polar residues) spans 765–774 (IQESLNNSSP).

In terms of assembly, interacts with YY1. Interacts with MAD2L2. Interacts with INO80. As to expression, ubiquitous. Detected in small intestine, skeletal muscle, lung, pancreas, brain, stomach, spleen, colon and heart. Detected at very low levels in healthy liver. Highly expressed in most liver carcinomas.

Its subcellular location is the cytoplasm. The protein resides in the nucleus. It is found in the nucleoplasm. The protein localises to the nucleolus. In terms of biological role, associates with the INO80 chromatin remodeling complex, which is responsible for transcriptional regulation, DNA repair, and replication. Enhances transcription activation by YY1. Plays a role in cell cycle regulation. This chain is YY1-associated protein 1, found in Homo sapiens (Human).